Reading from the N-terminus, the 527-residue chain is Zinc finger CCCH-type with G patch domain-containing protein (527 aa).

A disordered region spans residues 97-126 (GEVSGSSSDMREREDEREEEDDGEVEGEVD). Residues 111–125 (DEREEEDDGEVEGEV) show a composition bias toward acidic residues. Residues 173–200 (QKSMKPCPFFLEDKCRFADNCRFSHGEV) form a C3H1-type zinc finger. The interval 268 to 312 (LREDDLPSCSDSEDDDNGEGEAAFPRVLTQEEDWAPSRSSSAFGG) is disordered. The G-patch domain occupies 317–363 (TRGIGSKLMLKMGYEYGKGLGKTSEGRVEPVLAVVLPKGKSLDQCAE). Disordered stretches follow at residues 369–396 (TQRK…AHNT), 410–444 (LGNG…YKGG), and 505–527 (KAQE…MTEF). Residues 384 to 393 (RNKRTRKARA) show a composition bias toward basic residues. Over residues 511–527 (AQRENRKADTHKKMTEF) the composition is skewed to basic and acidic residues.

It is found in the nucleus. Functionally, transcription repressor that specifically binds the 5'-GGAG[GA]A[GA]A-3' consensus sequence. Represses transcription by recruiting the chromatin multiprotein complex NuRD to target promoters. Negatively regulates expression of EGFR, a gene involved in cell proliferation, survival and migration. The protein is Zinc finger CCCH-type with G patch domain-containing protein (zgpat) of Salmo salar (Atlantic salmon).